Reading from the N-terminus, the 178-residue chain is Protein GrpE (178 aa).

Residues 1–26 (MQDQDKYAEQAASMEEPASADAPAIV) are disordered.

It belongs to the GrpE family. In terms of assembly, homodimer.

It is found in the cytoplasm. Functionally, participates actively in the response to hyperosmotic and heat shock by preventing the aggregation of stress-denatured proteins, in association with DnaK and GrpE. It is the nucleotide exchange factor for DnaK and may function as a thermosensor. Unfolded proteins bind initially to DnaJ; upon interaction with the DnaJ-bound protein, DnaK hydrolyzes its bound ATP, resulting in the formation of a stable complex. GrpE releases ADP from DnaK; ATP binding to DnaK triggers the release of the substrate protein, thus completing the reaction cycle. Several rounds of ATP-dependent interactions between DnaJ, DnaK and GrpE are required for fully efficient folding. The protein is Protein GrpE of Herminiimonas arsenicoxydans.